The chain runs to 136 residues: Protein NrdI (136 aa).

It belongs to the NrdI family.

Its function is as follows. Probably involved in ribonucleotide reductase function. In Escherichia coli O1:K1 / APEC, this protein is Protein NrdI.